The primary structure comprises 362 residues: Chorismate synthase (362 aa).

Arg47 provides a ligand contact to NADP(+). FMN-binding positions include 124–126, Gly286, 301–305, and Arg327; these read RSS and KPTAT.

This sequence belongs to the chorismate synthase family. As to quaternary structure, homotetramer. FMNH2 serves as cofactor.

The catalysed reaction is 5-O-(1-carboxyvinyl)-3-phosphoshikimate = chorismate + phosphate. It functions in the pathway metabolic intermediate biosynthesis; chorismate biosynthesis; chorismate from D-erythrose 4-phosphate and phosphoenolpyruvate: step 7/7. Functionally, catalyzes the anti-1,4-elimination of the C-3 phosphate and the C-6 proR hydrogen from 5-enolpyruvylshikimate-3-phosphate (EPSP) to yield chorismate, which is the branch point compound that serves as the starting substrate for the three terminal pathways of aromatic amino acid biosynthesis. This reaction introduces a second double bond into the aromatic ring system. This chain is Chorismate synthase, found in Rippkaea orientalis (strain PCC 8801 / RF-1) (Cyanothece sp. (strain PCC 8801)).